A 467-amino-acid polypeptide reads, in one-letter code: ATP synthase subunit beta (467 aa).

150 to 157 (GGAGVGKT) contributes to the ATP binding site.

This sequence belongs to the ATPase alpha/beta chains family. As to quaternary structure, F-type ATPases have 2 components, CF(1) - the catalytic core - and CF(0) - the membrane proton channel. CF(1) has five subunits: alpha(3), beta(3), gamma(1), delta(1), epsilon(1). CF(0) has three main subunits: a(1), b(2) and c(9-12). The alpha and beta chains form an alternating ring which encloses part of the gamma chain. CF(1) is attached to CF(0) by a central stalk formed by the gamma and epsilon chains, while a peripheral stalk is formed by the delta and b chains.

It localises to the cell inner membrane. It catalyses the reaction ATP + H2O + 4 H(+)(in) = ADP + phosphate + 5 H(+)(out). Functionally, produces ATP from ADP in the presence of a proton gradient across the membrane. The catalytic sites are hosted primarily by the beta subunits. The chain is ATP synthase subunit beta from Aliivibrio fischeri (strain MJ11) (Vibrio fischeri).